A 251-amino-acid polypeptide reads, in one-letter code: Sugar fermentation stimulation protein homolog (251 aa).

Belongs to the SfsA family.

The chain is Sugar fermentation stimulation protein homolog from Prochlorococcus marinus (strain MIT 9313).